The chain runs to 360 residues: Peptide chain release factor 1 (360 aa).

The residue at position 234 (Gln-234) is an N5-methylglutamine. The segment at 285–305 (RAQGIAEDRKSQVGTGDRSER) is disordered.

It belongs to the prokaryotic/mitochondrial release factor family. Methylated by PrmC. Methylation increases the termination efficiency of RF1.

Its subcellular location is the cytoplasm. Functionally, peptide chain release factor 1 directs the termination of translation in response to the peptide chain termination codons UAG and UAA. The chain is Peptide chain release factor 1 from Clostridium beijerinckii (strain ATCC 51743 / NCIMB 8052) (Clostridium acetobutylicum).